The primary structure comprises 465 residues: Cysteine--tRNA ligase (465 aa).

C27 is a Zn(2+) binding site. The 'HIGH' region motif lies at 29 to 39 (PTVYDDAHLGH). The Zn(2+) site is built by C207, H237, and E241. Residues 269–273 (KMSKS) carry the 'KMSKS' region motif. K272 contacts ATP.

Belongs to the class-I aminoacyl-tRNA synthetase family. In terms of assembly, monomer. The cofactor is Zn(2+).

It is found in the cytoplasm. The catalysed reaction is tRNA(Cys) + L-cysteine + ATP = L-cysteinyl-tRNA(Cys) + AMP + diphosphate. The polypeptide is Cysteine--tRNA ligase (cysS) (Helicobacter pylori (strain ATCC 700392 / 26695) (Campylobacter pylori)).